The chain runs to 225 residues: MSTWMMFMFQESNSLYADNLVSFHNMVMIIVIMISTLTVYIIFDLFLNKFSNLYLLKNHNIEIIWMIVPIVILLIICFPSLKILYLIDEIVNPFFSIKSIGHQWYWSYEYPEFNNIEFYSYMLNYSDLNQFRLLETDNRMIIPMKIPLRLITTSTDVIHSWTVPSLGIKVDAVPGRINQLNLISKRPGIFFGQCSEICGMNHSFMPIMVESTSFKYFMNWIYKMN.

The Mitochondrial intermembrane segment spans residues 1 to 25 (MSTWMMFMFQESNSLYADNLVSFHN). A helical transmembrane segment spans residues 26–47 (MVMIIVIMISTLTVYIIFDLFL). Residues 48–62 (NKFSNLYLLKNHNIE) lie on the Mitochondrial matrix side of the membrane. Residues 63–82 (IIWMIVPIVILLIICFPSLK) form a helical membrane-spanning segment. Over 83-225 (ILYLIDEIVN…YFMNWIYKMN (143 aa)) the chain is Mitochondrial intermembrane. Cu cation contacts are provided by H159, C194, E196, C198, H202, and M205. A Mg(2+)-binding site is contributed by E196.

This sequence belongs to the cytochrome c oxidase subunit 2 family. As to quaternary structure, component of the cytochrome c oxidase (complex IV, CIV), a multisubunit enzyme composed of a catalytic core of 3 subunits and several supernumerary subunits. The complex exists as a monomer or a dimer and forms supercomplexes (SCs) in the inner mitochondrial membrane with ubiquinol-cytochrome c oxidoreductase (cytochrome b-c1 complex, complex III, CIII). It depends on Cu cation as a cofactor.

Its subcellular location is the mitochondrion inner membrane. The enzyme catalyses 4 Fe(II)-[cytochrome c] + O2 + 8 H(+)(in) = 4 Fe(III)-[cytochrome c] + 2 H2O + 4 H(+)(out). Component of the cytochrome c oxidase, the last enzyme in the mitochondrial electron transport chain which drives oxidative phosphorylation. The respiratory chain contains 3 multisubunit complexes succinate dehydrogenase (complex II, CII), ubiquinol-cytochrome c oxidoreductase (cytochrome b-c1 complex, complex III, CIII) and cytochrome c oxidase (complex IV, CIV), that cooperate to transfer electrons derived from NADH and succinate to molecular oxygen, creating an electrochemical gradient over the inner membrane that drives transmembrane transport and the ATP synthase. Cytochrome c oxidase is the component of the respiratory chain that catalyzes the reduction of oxygen to water. Electrons originating from reduced cytochrome c in the intermembrane space (IMS) are transferred via the dinuclear copper A center (CU(A)) of subunit 2 and heme A of subunit 1 to the active site in subunit 1, a binuclear center (BNC) formed by heme A3 and copper B (CU(B)). The BNC reduces molecular oxygen to 2 water molecules using 4 electrons from cytochrome c in the IMS and 4 protons from the mitochondrial matrix. This chain is Cytochrome c oxidase subunit 2 (COII), found in Apis florea (Dwarf honeybee).